Here is a 540-residue protein sequence, read N- to C-terminus: Transcription initiation factor IIF subunit alpha (540 aa).

Over residues M1–E26 the composition is skewed to basic and acidic residues. Disordered stretches follow at residues M1 to Q39 and I70 to N106. Composition is skewed to polar residues over residues S29–Q39 and A89–N106. Phosphoserine occurs at positions 259 and 261. Residues M280–S382 are a coiled coil. Residues Y341–S416 form a disordered region. Residues S359–E369 show a composition bias toward acidic residues. Positions F381–S416 are enriched in polar residues. S399 bears the Phosphoserine mark.

Belongs to the TFIIF alpha subunit family. As to quaternary structure, component of the fcp1/TFIIF/polII complex via interaction of tfg3 with both tfg1/TFIIF-alpha and tfg2/TFIIF-beta subunits.

It localises to the nucleus. Its function is as follows. TFIIF is a general transcription initiation factor that binds to RNA polymerase II and helps to recruit it to the initiation complex in collaboration with TFIIB. It promotes transcription elongation. This is Transcription initiation factor IIF subunit alpha (tfg1) from Schizosaccharomyces pombe (strain 972 / ATCC 24843) (Fission yeast).